We begin with the raw amino-acid sequence, 599 residues long: Kelch-like protein 24a (599 aa).

A BTB domain is found at 65–132 (TDVIISVQGR…VYTGRACITT (68 aa)). Residues 167–269 (CLGIQRFADA…HPNYFVQTVE (103 aa)) form the BACK domain. Kelch repeat units follow at residues 313 to 362 (VIVV…ALRN), 364 to 406 (IILS…VLLG), 407 to 453 (KVYA…SCAG), 455 to 501 (LFVI…SLNH), 503 to 543 (IYVC…VCNG), and 545 to 591 (IYIL…TVHR).

As to quaternary structure, forms homodimers. Component of the BCR(KLHL24) E3 ubiquitin ligase complex.

The protein resides in the perikaryon. The protein localises to the cell projection. It localises to the axon. It is found in the cytoplasm. Its subcellular location is the cell junction. The protein resides in the desmosome. The protein localises to the adherens junction. Necessary to maintain the balance between intermediate filament stability and degradation, a process that is essential for skin integrity. Reduces kainate receptor-mediated currents in brain neurons, most probably by modulating channel properties. It is required for proper heart development. This Danio rerio (Zebrafish) protein is Kelch-like protein 24a.